Consider the following 179-residue polypeptide: Large ribosomal subunit protein uL5 (179 aa).

The protein belongs to the universal ribosomal protein uL5 family. As to quaternary structure, part of the 50S ribosomal subunit; part of the 5S rRNA/L5/L18/L25 subcomplex. Contacts the 5S rRNA and the P site tRNA. Forms a bridge to the 30S subunit in the 70S ribosome.

In terms of biological role, this is one of the proteins that bind and probably mediate the attachment of the 5S RNA into the large ribosomal subunit, where it forms part of the central protuberance. In the 70S ribosome it contacts protein S13 of the 30S subunit (bridge B1b), connecting the 2 subunits; this bridge is implicated in subunit movement. Contacts the P site tRNA; the 5S rRNA and some of its associated proteins might help stabilize positioning of ribosome-bound tRNAs. This is Large ribosomal subunit protein uL5 from Nitrosomonas europaea (strain ATCC 19718 / CIP 103999 / KCTC 2705 / NBRC 14298).